We begin with the raw amino-acid sequence, 174 residues long: Gamma-crystallin D (174 aa).

2 Beta/gamma crystallin 'Greek key' domains span residues glycine 2–serine 40 and glycine 41–proline 83. The segment at histidine 84–serine 87 is connecting peptide. Beta/gamma crystallin 'Greek key' domains are found at residues histidine 88–glutamate 128 and glycine 129–methionine 171.

It belongs to the beta/gamma-crystallin family. As to expression, detected in the superior olivary complex of the auditory hindbrain.

In terms of biological role, crystallins are the dominant structural components of the vertebrate eye lens. In Mus musculus (Mouse), this protein is Gamma-crystallin D (Crygd).